We begin with the raw amino-acid sequence, 275 residues long: MAIKKFRPITPARRFMSVMDTSDITSKPTVRSLLVKVKASAGRNNNGRITSRHKEAGAKKLYRIIDFKRNKFGIEGTVATVEYDPYRNCRICLVSYLDGDKRYIIQPSGLKVGDKVQAAESGLDILPGNAMQLSNIPVGTMVHNIELKPGKGAQIARAAGGYAQIMGREDKYVILRLPSGEMRKILGVCMATVGVVGNEDYTNMVVGKAGRSRHLGIRPQTRGSAMNPIDHPHGGGEGKTNSGRHPVTPWGMPTKGYKTRKKKASDKLIISKRKK.

The segment at 216–275 is disordered; that stretch reads GIRPQTRGSAMNPIDHPHGGGEGKTNSGRHPVTPWGMPTKGYKTRKKKASDKLIISKRKK. Basic residues predominate over residues 257 to 275; the sequence is YKTRKKKASDKLIISKRKK.

The protein belongs to the universal ribosomal protein uL2 family. In terms of assembly, part of the 50S ribosomal subunit. Forms a bridge to the 30S subunit in the 70S ribosome.

In terms of biological role, one of the primary rRNA binding proteins. Required for association of the 30S and 50S subunits to form the 70S ribosome, for tRNA binding and peptide bond formation. It has been suggested to have peptidyltransferase activity; this is somewhat controversial. Makes several contacts with the 16S rRNA in the 70S ribosome. The sequence is that of Large ribosomal subunit protein uL2 from Aliarcobacter butzleri (strain RM4018) (Arcobacter butzleri).